Consider the following 463-residue polypeptide: Probable multidrug resistance protein YoeA (463 aa).

The next 12 helical transmembrane spans lie at 24 to 44 (LFLV…LVGM), 56 to 76 (VAAV…TIGI), 106 to 126 (FTFL…LDIL), 143 to 163 (ARIL…TTFL), 177 to 197 (IVST…MFGF), 202 to 222 (IYGS…VLMV), 256 to 276 (VPAS…ISFV), 293 to 313 (VASY…IFAA), 330 to 350 (VGIW…YVFS), 370 to 390 (LLMI…ISAT), 397 to 417 (VLWP…PVAF), and 427 to 447 (ILGV…LIYG).

The protein belongs to the multi antimicrobial extrusion (MATE) (TC 2.A.66.1) family.

It localises to the cell membrane. In Bacillus subtilis (strain 168), this protein is Probable multidrug resistance protein YoeA (yoeA).